A 32-amino-acid chain; its full sequence is Ranatuerin-2La (32 aa).

A disulfide bridge links Cys27 with Cys32.

As to expression, expressed by the skin glands.

The protein localises to the secreted. In terms of biological role, antibacterial activity against Gram-positive bacterium S.aureus and Gram-negative bacterium E.coli. Weak activity against C.albicans. This is Ranatuerin-2La from Rana luteiventris (Columbia spotted frog).